Here is a 125-residue protein sequence, read N- to C-terminus: MAGGVGARVVVGRHIYGNLYGCDPQILRDESALITIIKEATKIANAMLLSVGSYRFGPNGGLTVFAIVAESHISIHTWPEYGFATVDVYTCGDHTDPKAAFDYIVSKLKPQKVEAFFGDRSMYKE.

Serine 71 serves as the catalytic Schiff-base intermediate with substrate; via pyruvic acid. A Pyruvic acid (Ser); by autocatalysis modification is found at serine 71. Histidine 76 serves as the catalytic Proton acceptor; for processing activity. Cysteine 91 functions as the Proton donor; for catalytic activity in the catalytic mechanism.

This sequence belongs to the prokaryotic AdoMetDC family. Type 1 subfamily. As to quaternary structure, heterotetramer of two alpha and two beta chains arranged as a dimer of alpha/beta heterodimers. The cofactor is pyruvate. In terms of processing, is synthesized initially as an inactive proenzyme. Formation of the active enzyme involves a self-maturation process in which the active site pyruvoyl group is generated from an internal serine residue via an autocatalytic post-translational modification. Two non-identical subunits are generated from the proenzyme in this reaction, and the pyruvate is formed at the N-terminus of the alpha chain, which is derived from the carboxyl end of the proenzyme. The post-translation cleavage follows an unusual pathway, termed non-hydrolytic serinolysis, in which the side chain hydroxyl group of the serine supplies its oxygen atom to form the C-terminus of the beta chain, while the remainder of the serine residue undergoes an oxidative deamination to produce ammonia and the pyruvoyl group blocking the N-terminus of the alpha chain.

The catalysed reaction is S-adenosyl-L-methionine + H(+) = S-adenosyl 3-(methylsulfanyl)propylamine + CO2. Its pathway is amine and polyamine biosynthesis; S-adenosylmethioninamine biosynthesis; S-adenosylmethioninamine from S-adenosyl-L-methionine: step 1/1. Catalyzes the decarboxylation of S-adenosylmethionine to S-adenosylmethioninamine (dcAdoMet), the propylamine donor required for the synthesis of the polyamines spermine and spermidine from the diamine putrescine. This is S-adenosylmethionine decarboxylase proenzyme from Pyrobaculum islandicum (strain DSM 4184 / JCM 9189 / GEO3).